Here is a 269-residue protein sequence, read N- to C-terminus: Eukaryotic translation initiation factor 3 subunit G-1 (269 aa).

The region spanning 188–266 (AAIRISNLSE…LILSVEWSKP (79 aa)) is the RRM domain.

It belongs to the eIF-3 subunit G family. Component of the eukaryotic translation initiation factor 3 (eIF-3) complex. The eIF-3 complex interacts with pix.

Its subcellular location is the cytoplasm. Functionally, RNA-binding component of the eukaryotic translation initiation factor 3 (eIF-3) complex, which is involved in protein synthesis of a specialized repertoire of mRNAs and, together with other initiation factors, stimulates binding of mRNA and methionyl-tRNAi to the 40S ribosome. The eIF-3 complex specifically targets and initiates translation of a subset of mRNAs involved in cell proliferation. This subunit can bind 18S rRNA. This Drosophila virilis (Fruit fly) protein is Eukaryotic translation initiation factor 3 subunit G-1.